A 346-amino-acid chain; its full sequence is Patr class I histocompatibility antigen, CH28 alpha chain (346 aa).

A signal peptide spans 1–21 (MAPRSLLLLFSGALALTETWA). Residues 22–111 (GSHSLRYFST…LLRRYNQSEA (90 aa)) form an alpha-1 region. The Extracellular portion of the chain corresponds to 22–305 (GSHSLRYFST…EQSPQPTIPI (284 aa)). Asn107 is a glycosylation site (N-linked (GlcNAc...) asparagine). The segment at 112 to 203 (GSHTLQGMNG…ENGKETLQRA (92 aa)) is alpha-2. Intrachain disulfides connect Cys122–Cys185 and Cys224–Cys280. Residues 204 to 295 (DPPKAHIAHH…GLPQPLTLRW (92 aa)) are alpha-3. The Ig-like C1-type domain maps to 206 to 294 (PKAHIAHHPI…EGLPQPLTLR (89 aa)). The interval 296–305 (EQSPQPTIPI) is connecting peptide. Residues 306–329 (VGIVAGLVVLGAVVTGAVVAAVMW) traverse the membrane as a helical segment. Residues 330 to 346 (RKKSSDRNRGSYSQAAV) lie on the Cytoplasmic side of the membrane.

It belongs to the MHC class I family. Heterodimer of an alpha chain and a beta chain (beta-2-microglobulin).

The protein resides in the membrane. Functionally, involved in the presentation of foreign antigens to the immune system. This is Patr class I histocompatibility antigen, CH28 alpha chain from Pan troglodytes (Chimpanzee).